Reading from the N-terminus, the 256-residue chain is MEAALGLLRRMPPKQSETALSALLSLIPQHSSDLLSQVDLPLQVLRDIESGKDFILCEYNRDADSYRSPWSNKYLPPLEDALYPSSELRKLEVEANDIFAIYRDQYYEGGISSVYMWEDDNEGFVACFLIKKDGSKSGHGRRGCLEEGAWDAIHVIQVGSEEEEMAQYCLTSTIMLSLTTDDESSGKFGLSGSIRRQMKMELAVADGHLCNMGRMIEELEGKLRNSLDQVYFGKTREMVCTLRPPAEIVQMRLPDT.

An N-acetylmethionine modification is found at methionine 1.

This sequence belongs to the F-actin-capping protein beta subunit family. As to quaternary structure, component of the F-actin capping complex, composed of a heterodimer of an alpha and a beta subunit.

The protein resides in the cytoplasm. It is found in the cytoskeleton. F-actin-capping proteins bind in a Ca(2+)-independent manner to the fast growing ends of actin filaments (barbed end) thereby blocking the exchange of subunits at these ends. Unlike other capping proteins (such as gelsolin and severin), these proteins do not sever actin filaments. The protein is F-actin-capping protein subunit beta of Arabidopsis thaliana (Mouse-ear cress).